A 122-amino-acid chain; its full sequence is Large ribosomal subunit protein uL14 (122 aa).

Belongs to the universal ribosomal protein uL14 family. As to quaternary structure, part of the 50S ribosomal subunit. Forms a cluster with proteins L3 and L19. In the 70S ribosome, L14 and L19 interact and together make contacts with the 16S rRNA in bridges B5 and B8.

In terms of biological role, binds to 23S rRNA. Forms part of two intersubunit bridges in the 70S ribosome. This Solidesulfovibrio magneticus (strain ATCC 700980 / DSM 13731 / RS-1) (Desulfovibrio magneticus) protein is Large ribosomal subunit protein uL14.